The chain runs to 314 residues: Homoserine kinase (314 aa).

97-107 (PPARGMGSSAT) is an ATP binding site.

The protein belongs to the GHMP kinase family. Homoserine kinase subfamily.

The protein localises to the cytoplasm. The enzyme catalyses L-homoserine + ATP = O-phospho-L-homoserine + ADP + H(+). Its pathway is amino-acid biosynthesis; L-threonine biosynthesis; L-threonine from L-aspartate: step 4/5. Functionally, catalyzes the ATP-dependent phosphorylation of L-homoserine to L-homoserine phosphate. This chain is Homoserine kinase, found in Synechococcus sp. (strain RCC307).